A 123-amino-acid polypeptide reads, in one-letter code: Small ribosomal subunit protein uS12 (123 aa).

D89 carries the 3-methylthioaspartic acid modification.

Belongs to the universal ribosomal protein uS12 family. Part of the 30S ribosomal subunit. Contacts proteins S8 and S17. May interact with IF1 in the 30S initiation complex.

In terms of biological role, with S4 and S5 plays an important role in translational accuracy. Its function is as follows. Interacts with and stabilizes bases of the 16S rRNA that are involved in tRNA selection in the A site and with the mRNA backbone. Located at the interface of the 30S and 50S subunits, it traverses the body of the 30S subunit contacting proteins on the other side and probably holding the rRNA structure together. The combined cluster of proteins S8, S12 and S17 appears to hold together the shoulder and platform of the 30S subunit. The sequence is that of Small ribosomal subunit protein uS12 from Syntrophus aciditrophicus (strain SB).